We begin with the raw amino-acid sequence, 301 residues long: Small ribosomal subunit biogenesis GTPase RsgA (301 aa).

The CP-type G domain maps to 65 to 224 (YNQLIRPKVA…LVDTPGFGNL (160 aa)). Residues 115–118 (SKYD) and 167–175 (GNSGVGKST) each bind GTP. Cys-247, Cys-252, His-254, and Cys-260 together coordinate Zn(2+).

Belongs to the TRAFAC class YlqF/YawG GTPase family. RsgA subfamily. Monomer. Associates with 30S ribosomal subunit, binds 16S rRNA. Requires Zn(2+) as cofactor.

It is found in the cytoplasm. Its function is as follows. One of several proteins that assist in the late maturation steps of the functional core of the 30S ribosomal subunit. Helps release RbfA from mature subunits. May play a role in the assembly of ribosomal proteins into the subunit. Circularly permuted GTPase that catalyzes slow GTP hydrolysis, GTPase activity is stimulated by the 30S ribosomal subunit. This chain is Small ribosomal subunit biogenesis GTPase RsgA, found in Ureaplasma urealyticum serovar 10 (strain ATCC 33699 / Western).